The chain runs to 446 residues: Inhibitor of Apoptosis OPG037 (446 aa).

ANK repeat units lie at residues 71-100 (DGNY…DPNA), 104-135 (QHKT…KINN), 207-237 (DGNT…DVNK), 241-271 (FGDS…VITD), 296-325 (YDST…ICED), and 327-351 (MYYA…SVDS).

The protein belongs to the orthopoxvirus OPG037 protein family. As to quaternary structure, may interact with host caspase-9-Apaf-1 complex.

Its subcellular location is the host cytoplasm. Functionally, inhibits host apoptosis. Acts by associating with host apoptosome. The polypeptide is Inhibitor of Apoptosis OPG037 (OPG037) (Variola virus (isolate Human/India/Ind3/1967) (VARV)).